The primary structure comprises 291 residues: Omega-amidase NIT3 (291 aa).

A CN hydrolase domain is found at 11–264; the sequence is IKVALVQLSG…EEIIYAELDP (254 aa). Residue T34 is modified to Phosphothreonine. Catalysis depends on E53, which acts as the Proton acceptor. K128 serves as the catalytic Proton donor. C169 (nucleophile) is an active-site residue.

The protein belongs to the carbon-nitrogen hydrolase superfamily. NIT1/NIT2 family. In terms of assembly, homodimer.

It catalyses the reaction a monoamide of a dicarboxylate + H2O = a dicarboxylate + NH4(+). Its function is as follows. Possesses omega-amidase activity. The role of omega-amidase is to remove potentially toxic intermediates by converting 2-oxoglutaramate and 2-oxosuccinamate to biologically useful 2-oxoglutarate and oxaloacetate, respectively. This Saccharomyces cerevisiae (strain ATCC 204508 / S288c) (Baker's yeast) protein is Omega-amidase NIT3 (NIT3).